Reading from the N-terminus, the 28-residue chain is AKTIAYDEEARRGLERGLNSLADAVKVT.

This sequence belongs to the chaperonin (HSP60) family. As to quaternary structure, forms a cylinder of 14 subunits composed of two heptameric rings stacked back-to-back. Interacts with the co-chaperonin GroES.

The protein localises to the cytoplasm. It carries out the reaction ATP + H2O + a folded polypeptide = ADP + phosphate + an unfolded polypeptide.. Functionally, together with its co-chaperonin GroES, plays an essential role in assisting protein folding. The GroEL-GroES system forms a nano-cage that allows encapsulation of the non-native substrate proteins and provides a physical environment optimized to promote and accelerate protein folding. The sequence is that of Chaperonin GroEL from Mycolicibacterium smegmatis (Mycobacterium smegmatis).